Reading from the N-terminus, the 326-residue chain is Malate dehydrogenase (326 aa).

12–18 (GAAGQIA) contacts NAD(+). Substrate is bound by residues R93 and R99. NAD(+)-binding positions include N106, Q113, and 130–132 (VGN). Residues N132 and R163 each contribute to the substrate site. The active-site Proton acceptor is the H188.

The protein belongs to the LDH/MDH superfamily. MDH type 2 family.

It catalyses the reaction (S)-malate + NAD(+) = oxaloacetate + NADH + H(+). In terms of biological role, catalyzes the reversible oxidation of malate to oxaloacetate. This is Malate dehydrogenase from Corynebacterium diphtheriae (strain ATCC 700971 / NCTC 13129 / Biotype gravis).